A 264-amino-acid polypeptide reads, in one-letter code: Phosphoribosylaminoimidazole-succinocarboxamide synthase 1 (264 aa).

This sequence belongs to the SAICAR synthetase family.

It catalyses the reaction 5-amino-1-(5-phospho-D-ribosyl)imidazole-4-carboxylate + L-aspartate + ATP = (2S)-2-[5-amino-1-(5-phospho-beta-D-ribosyl)imidazole-4-carboxamido]succinate + ADP + phosphate + 2 H(+). The protein operates within purine metabolism; IMP biosynthesis via de novo pathway; 5-amino-1-(5-phospho-D-ribosyl)imidazole-4-carboxamide from 5-amino-1-(5-phospho-D-ribosyl)imidazole-4-carboxylate: step 1/2. This is Phosphoribosylaminoimidazole-succinocarboxamide synthase 1 (purC1) from Mesorhizobium japonicum (strain LMG 29417 / CECT 9101 / MAFF 303099) (Mesorhizobium loti (strain MAFF 303099)).